Reading from the N-terminus, the 500-residue chain is Cytochrome P450 11B3, mitochondrial (500 aa).

Residues 1-24 constitute a mitochondrion transit peptide; it reads MALRVTADVWLARPWQCLHRTRAL. Cysteine 447 provides a ligand contact to heme.

This sequence belongs to the cytochrome P450 family. The cofactor is heme. As to expression, expressed in the adrenal cortex and in different brain tissues, including hippocampus, hypothalamus, cerebellum, cerebral cortex, and midbrain.

The protein resides in the mitochondrion membrane. The catalysed reaction is a steroid + 2 reduced [adrenodoxin] + O2 + 2 H(+) = an 11beta-hydroxysteroid + 2 oxidized [adrenodoxin] + H2O. The enzyme catalyses 21-hydroxyprogesterone + 2 reduced [adrenodoxin] + O2 + 2 H(+) = corticosterone + 2 oxidized [adrenodoxin] + H2O. It carries out the reaction 21-hydroxyprogesterone + 2 reduced [adrenodoxin] + O2 + 2 H(+) = 18-hydroxy-11-deoxycorticosterone + 2 oxidized [adrenodoxin] + H2O. It catalyses the reaction 21-hydroxyprogesterone + 2 reduced [adrenodoxin] + O2 + 2 H(+) = 19-hydroxy-11-deoxycorticosterone + 2 oxidized [adrenodoxin] + H2O. Functionally, a cytochrome P450 monooxygenase involved in the biosynthesis of adrenal corticoids. Catalyzes the hydroxylation of steroids at 11beta, 18- or 19-positions, with preferred regioselectivity at 11beta and 18. Converts 11-deoxycorticosterone into corticosterone, 18-hydroxy-11-deoxycorticosterone, and/or 19-hydroxy-11-deoxycorticosterone, but not to 18-hydroxycorticosterone or aldosterone. Mechanistically, uses molecular oxygen inserting one oxygen atom into a substrate for hydroxylation and reducing the second into a water molecule. Two electrons are provided by NADPH via a two-protein mitochondrial transfer system comprising flavoprotein FDXR (adrenodoxin/ferredoxin reductase) and nonheme iron-sulfur protein FDX1 or FDX2 (adrenodoxin/ferredoxin). The chain is Cytochrome P450 11B3, mitochondrial (Cyp11b3) from Rattus norvegicus (Rat).